We begin with the raw amino-acid sequence, 141 residues long: Hemoglobin subunit alpha-1 (141 aa).

Residues Val-1–Arg-141 form the Globin domain. His-58 provides a ligand contact to O2. Position 87 (His-87) interacts with heme b.

This sequence belongs to the globin family. Heterotetramer of two alpha chains and two beta chains. In terms of tissue distribution, red blood cells.

Functionally, involved in oxygen transport from the lung to the various peripheral tissues. The sequence is that of Hemoglobin subunit alpha-1 from Varecia variegata (Black-and-white ruffed lemur).